A 378-amino-acid chain; its full sequence is MKILVDENMPYARDLFSRLGEVTAVPGRPIPVAQLADADALMVRSVTKVNESLLGGKPIKFVGTATAGTDHVDEAWLKQAGIGFSAAPGCNAIAVVEYVFSSLLMLAERDGFSLHDRTVGIVGVGNVGRRLQARLEALGITTLLCDPPRADRGDEGDFRSLDELVQHADILTFHTPLFKDGPYKTLHLADEKLIRSLKPGAILINACRGAVVDNTALLTCLNEGQKLSVVLDVWEGEPELNVELLKKVDIGTPHIAGYTLEGKARGTTQVFEAYSKFIGHEQHVALDTLLPAPEFGRITLHGPLDQPTLKRLVHLVYDVRRDDAPLRKVAGIPGEFDKLRKNYLERREWSSLYVICDDASAASLLCKLGFNAVHHPAR.

The substrate site is built by S45 and T66. The NAD(+) site is built by D146 and T175. R208 is a catalytic residue. Residue D232 participates in NAD(+) binding. Residue E237 is part of the active site. Residue H254 is the Proton donor of the active site. Residue G257 participates in NAD(+) binding. Y258 provides a ligand contact to substrate.

Belongs to the D-isomer specific 2-hydroxyacid dehydrogenase family. PdxB subfamily. Homodimer.

Its subcellular location is the cytoplasm. The catalysed reaction is 4-phospho-D-erythronate + NAD(+) = (R)-3-hydroxy-2-oxo-4-phosphooxybutanoate + NADH + H(+). The protein operates within cofactor biosynthesis; pyridoxine 5'-phosphate biosynthesis; pyridoxine 5'-phosphate from D-erythrose 4-phosphate: step 2/5. Its function is as follows. Catalyzes the oxidation of erythronate-4-phosphate to 3-hydroxy-2-oxo-4-phosphonooxybutanoate. The sequence is that of Erythronate-4-phosphate dehydrogenase from Escherichia coli O17:K52:H18 (strain UMN026 / ExPEC).